The following is a 306-amino-acid chain: MTASLHIILDTDPGIDDAAAIAAALFAPQLDLQLITTVAGNVSVEKTTRNALQLLHFWNSDIPLAQGAATPLLRPLRDAAYVHGESGMEGYDFVDHQRQPLAKPAFIAIRDVLMNAPEPMTLVAIGPLTNIALLLMHYPECACNIRRLVLMGGSAGRGNFTPNAEFNIAVDPEAAALVFRSGLEIVMCGLDVTNQAMLSPDFLNKLPALNRTGKMLHSLFNHYRSGSMRTGVRMHDLCAIAWLVRPELFTLQSCFVAVETQGEYTAGTTVVDIEGRLGQPANAQVALALDVDGFRQWVAEVFAYVP.

H235 is a catalytic residue.

This sequence belongs to the IUNH family. RihC subfamily.

Hydrolyzes both purine and pyrimidine ribonucleosides with a broad-substrate specificity. The protein is Non-specific ribonucleoside hydrolase RihC of Salmonella typhi.